Consider the following 70-residue polypeptide: Large ribosomal subunit protein bL31 (70 aa).

Zn(2+)-binding residues include Cys-16, Cys-18, Cys-37, and Cys-40.

It belongs to the bacterial ribosomal protein bL31 family. Type A subfamily. Part of the 50S ribosomal subunit. Requires Zn(2+) as cofactor.

In terms of biological role, binds the 23S rRNA. This is Large ribosomal subunit protein bL31 from Proteus mirabilis (strain HI4320).